Reading from the N-terminus, the 95-residue chain is Exodeoxyribonuclease 7 small subunit (95 aa).

Residues 65–95 (ETINPAETARPAKPENAPESPRMNDLFGTES) are disordered.

The protein belongs to the XseB family. As to quaternary structure, heterooligomer composed of large and small subunits.

It is found in the cytoplasm. The catalysed reaction is Exonucleolytic cleavage in either 5'- to 3'- or 3'- to 5'-direction to yield nucleoside 5'-phosphates.. Bidirectionally degrades single-stranded DNA into large acid-insoluble oligonucleotides, which are then degraded further into small acid-soluble oligonucleotides. The protein is Exodeoxyribonuclease 7 small subunit of Chlorobaculum tepidum (strain ATCC 49652 / DSM 12025 / NBRC 103806 / TLS) (Chlorobium tepidum).